A 265-amino-acid chain; its full sequence is Glutamate racemase (265 aa).

Residues 12–13 and 44–45 each bind substrate; these read DS and YG. The Proton donor/acceptor role is filled by C75. Residue 76 to 77 coordinates substrate; sequence NT. C186 (proton donor/acceptor) is an active-site residue. 187-188 is a binding site for substrate; it reads TH.

The protein belongs to the aspartate/glutamate racemases family.

It carries out the reaction L-glutamate = D-glutamate. Its pathway is cell wall biogenesis; peptidoglycan biosynthesis. Its function is as follows. Provides the (R)-glutamate required for cell wall biosynthesis. The protein is Glutamate racemase of Pseudomonas paraeruginosa (strain DSM 24068 / PA7) (Pseudomonas aeruginosa (strain PA7)).